A 77-amino-acid polypeptide reads, in one-letter code: Large ribosomal subunit protein bL28 (77 aa).

The protein belongs to the bacterial ribosomal protein bL28 family.

In Polynucleobacter necessarius subsp. necessarius (strain STIR1), this protein is Large ribosomal subunit protein bL28.